The following is a 501-amino-acid chain: Glycerol kinase (501 aa).

Threonine 12 contacts ADP. 3 residues coordinate ATP: threonine 12, threonine 13, and serine 14. Residue threonine 12 coordinates sn-glycerol 3-phosphate. Arginine 16 contributes to the ADP binding site. Sn-glycerol 3-phosphate is bound by residues arginine 82, glutamate 83, tyrosine 134, and aspartate 244. 5 residues coordinate glycerol: arginine 82, glutamate 83, tyrosine 134, aspartate 244, and glutamine 245. ADP contacts are provided by threonine 266 and glycine 310. Positions 266, 310, 314, and 411 each coordinate ATP. Residues glycine 411 and asparagine 415 each coordinate ADP.

The protein belongs to the FGGY kinase family.

It carries out the reaction glycerol + ATP = sn-glycerol 3-phosphate + ADP + H(+). The protein operates within polyol metabolism; glycerol degradation via glycerol kinase pathway; sn-glycerol 3-phosphate from glycerol: step 1/1. Inhibited by fructose 1,6-bisphosphate (FBP). Key enzyme in the regulation of glycerol uptake and metabolism. Catalyzes the phosphorylation of glycerol to yield sn-glycerol 3-phosphate. This Methylobacterium radiotolerans (strain ATCC 27329 / DSM 1819 / JCM 2831 / NBRC 15690 / NCIMB 10815 / 0-1) protein is Glycerol kinase.